The following is a 498-amino-acid chain: ATP synthase subunit beta, chloroplastic (498 aa).

Residue 172–179 (GGAGVGKT) coordinates ATP.

This sequence belongs to the ATPase alpha/beta chains family. F-type ATPases have 2 components, CF(1) - the catalytic core - and CF(0) - the membrane proton channel. CF(1) has five subunits: alpha(3), beta(3), gamma(1), delta(1), epsilon(1). CF(0) has four main subunits: a(1), b(1), b'(1) and c(9-12).

Its subcellular location is the plastid. It localises to the chloroplast thylakoid membrane. It carries out the reaction ATP + H2O + 4 H(+)(in) = ADP + phosphate + 5 H(+)(out). Functionally, produces ATP from ADP in the presence of a proton gradient across the membrane. The catalytic sites are hosted primarily by the beta subunits. This chain is ATP synthase subunit beta, chloroplastic, found in Phormium tenax (New Zealand flax).